The primary structure comprises 392 residues: G2/mitotic-specific cyclin-B2 (392 aa).

Belongs to the cyclin family. Cyclin AB subfamily. In terms of assembly, interacts with the CDK1 protein kinase to form a serine/threonine kinase holoenzyme complex also known as maturation promoting factor (MPF). The cyclin subunit imparts substrate specificity to the complex.

Functionally, essential for the control of the cell cycle at the G2/M (mitosis) transition. This is G2/mitotic-specific cyclin-B2 (CCNB2) from Rana japonica (Japanese reddish frog).